Consider the following 697-residue polypeptide: Elongation factor G (697 aa).

In terms of domain architecture, tr-type G spans 8-283; the sequence is EHIRNIGICA…AVVDFLPSPT (276 aa). GTP-binding positions include 17-24, 81-85, and 135-138; these read AHIDAGKT, DTPGH, and NKMD.

This sequence belongs to the TRAFAC class translation factor GTPase superfamily. Classic translation factor GTPase family. EF-G/EF-2 subfamily.

The protein localises to the cytoplasm. Functionally, catalyzes the GTP-dependent ribosomal translocation step during translation elongation. During this step, the ribosome changes from the pre-translocational (PRE) to the post-translocational (POST) state as the newly formed A-site-bound peptidyl-tRNA and P-site-bound deacylated tRNA move to the P and E sites, respectively. Catalyzes the coordinated movement of the two tRNA molecules, the mRNA and conformational changes in the ribosome. In Rickettsia massiliae (strain Mtu5), this protein is Elongation factor G.